Consider the following 188-residue polypeptide: CASP-like protein 4B1 (188 aa).

The segment covering 1–11 has biased composition (basic and acidic residues); sequence MTNPDKQKPVE. Positions 1–34 are disordered; the sequence is MTNPDKQKPVEVTDVETAAEKTSEPTPASGTSTI. Topologically, residues 1–46 are cytoplasmic; the sequence is MTNPDKQKPVEVTDVETAAEKTSEPTPASGTSTITQRWKREDLIKK. Residues 24–34 show a composition bias toward polar residues; sequence EPTPASGTSTI. A helical membrane pass occupies residues 47–67; the sequence is ASPITRGICLLFSLLAFLIMV. The Extracellular segment spans residues 68–84; that stretch reads SNKHGYGRNFNEYEEYR. Residues 85-105 form a helical membrane-spanning segment; it reads YVLAISIISTLYTAWQTFAHF. At 106–120 the chain is on the cytoplasmic side; it reads SKREFFDRRTSTLVD. A helical transmembrane segment spans residues 121–141; sequence FSGDQIVAYLLISAASSAIPL. The Extracellular portion of the chain corresponds to 142–156; it reads TNRFREGQDNIFTDS. The chain crosses the membrane as a helical span at residues 157–177; the sequence is AASAISMAIFAFVALALSALF. The Cytoplasmic segment spans residues 178-188; it reads SGYKLSTHSFI.

This sequence belongs to the Casparian strip membrane proteins (CASP) family. As to quaternary structure, homodimer and heterodimers.

It localises to the cell membrane. This is CASP-like protein 4B1 from Arabidopsis lyrata subsp. lyrata (Lyre-leaved rock-cress).